The chain runs to 266 residues: MVSGLTVAEIRKLAGSRAGLDEDFLRALACDKRAGVAEIYRRLKRDENKMAAEAERLQKLYIYENSLIAQGYSPVAGVDEAGRGPLAGPVVAAAVILPPVADLALAGLNDSKKLNPSKRAELAARIKKVALAWSAGISTVEEIFNENIHAASLTAMRRAVLKLKIRPAYLLVDGYRISRLELPQLALTGGDGLSASVAAASILAKVLRDRLMDFYHVQYPQYGFNRHKGYATPEHLAALERYGPCPLHRAGYRPVKNCGSRQKCEG.

One can recognise an RNase H type-2 domain in the interval 73 to 266 (SPVAGVDEAG…NCGSRQKCEG (194 aa)). Residues aspartate 79, glutamate 80, and aspartate 173 each contribute to the a divalent metal cation site.

This sequence belongs to the RNase HII family. Mn(2+) is required as a cofactor. It depends on Mg(2+) as a cofactor.

It is found in the cytoplasm. It carries out the reaction Endonucleolytic cleavage to 5'-phosphomonoester.. Functionally, endonuclease that specifically degrades the RNA of RNA-DNA hybrids. The chain is Ribonuclease HII from Pelotomaculum thermopropionicum (strain DSM 13744 / JCM 10971 / SI).